We begin with the raw amino-acid sequence, 210 residues long: uncharacterized protein (210 aa).

The protein to E.coli YkgK.

This is an uncharacterized protein from Escherichia coli (strain K12).